A 114-amino-acid chain; its full sequence is MAEEKHQHHHHLFHHKNKEDEGGPVDYEKEVKHHSHLEKIGELGAVAAGALALHEKHKAKKDPEHAHKHKIEEEIMAVAAVGAGGFAFHEHHQKKDAKKEKKEVEGGHHHHHHY.

2 disordered regions span residues 1 to 25 (MAEE…GGPV) and 88 to 114 (FHEH…HHHY). The segment covering 7-16 (QHHHHLFHHK) has biased composition (basic residues). Residues 97–107 (AKKEKKEVEGG) are compositionally biased toward basic and acidic residues.

This sequence belongs to the abscisic acid and water stress-induced protein family.

This Solanum lycopersicum (Tomato) protein is Abscisic stress-ripening protein 2.